The chain runs to 394 residues: MDLFEYQARDLFAKHDVPVLAGEVIDTPEAAREITERLGGKSVVKAQVKVGGRGKAGGVKLAASADEAVARATDILGMDIKGHTVHKVMIAETAPEIVEEYYVSFLLDRANRTFLSIASVEGGVEIEEVAATRPEAVAKTPIDAIDGVTPEKAREIVEAAKFPAEVADKVADILVKLWDTFIKEDALLVEVNPLAKVVSGDVIALDGKVSLDDNAEFRHPDFEALHDKAAANPLEAAAKEKNLNYVKLDGEVGIIGNGAGLVMSTLDVVAYAGEAHGNVKPANFLDIGGGASAQVMANGLEIILGDPDVRSVFVNVFGGITACDEVANGIVQALKLLEDRGEKVEKPLVVRLDGNNAELGRKILTDANHPLVQRVDTMDGAADKAAELAHAAAK.

The ATP-grasp domain occupies Arg-9–Ala-237. ATP is bound by residues Lys-45, Gly-52 to Gly-54, Glu-92, Pro-95, and Glu-100. Residues Asn-192 and Asp-206 each coordinate Mg(2+). Substrate-binding positions include Asn-257 and Gly-319–Thr-321.

It belongs to the succinate/malate CoA ligase beta subunit family. In terms of assembly, heterotetramer of two alpha and two beta subunits. The cofactor is Mg(2+).

The catalysed reaction is succinate + ATP + CoA = succinyl-CoA + ADP + phosphate. It carries out the reaction GTP + succinate + CoA = succinyl-CoA + GDP + phosphate. It functions in the pathway carbohydrate metabolism; tricarboxylic acid cycle; succinate from succinyl-CoA (ligase route): step 1/1. Functionally, succinyl-CoA synthetase functions in the citric acid cycle (TCA), coupling the hydrolysis of succinyl-CoA to the synthesis of either ATP or GTP and thus represents the only step of substrate-level phosphorylation in the TCA. The beta subunit provides nucleotide specificity of the enzyme and binds the substrate succinate, while the binding sites for coenzyme A and phosphate are found in the alpha subunit. This chain is Succinate--CoA ligase [ADP-forming] subunit beta 1, found in Streptomyces coelicolor (strain ATCC BAA-471 / A3(2) / M145).